Consider the following 483-residue polypeptide: Fructose-like PTS system EIIBC component (483 aa).

A PTS EIIB type-2 domain is found at 1–105 (MESSLRIVAI…IDQIFSELPT (105 aa)). Cys13 functions as the Phosphocysteine intermediate; for EIIB activity in the catalytic mechanism. Cys13 is modified (phosphocysteine; by EIIA). Positions 128 to 475 (VMSHLMAGVS…LWLRRKAKAA (348 aa)) constitute a PTS EIIC type-2 domain. The next 10 membrane-spanning stretches (helical) occupy residues 132 to 152 (LMAG…LVAL), 180 to 200 (IGYL…ASSI), 204 to 224 (PAFA…LLGT), 227 to 247 (GAGF…VFWF), 264 to 284 (LIPF…IGPV), 303 to 323 (MKFA…GGPI), 344 to 364 (AIVG…TFIA), 380 to 400 (IVVG…AAPL), 402 to 422 (MITA…AFGI), and 442 to 462 (VGSF…FIIV).

Its subcellular location is the cell inner membrane. It catalyses the reaction D-fructose(out) + N(pros)-phospho-L-histidyl-[protein] = D-fructose 1-phosphate(in) + L-histidyl-[protein]. Functionally, the phosphoenolpyruvate-dependent sugar phosphotransferase system (sugar PTS), a major carbohydrate active transport system, catalyzes the phosphorylation of incoming sugar substrates concomitantly with their translocation across the cell membrane. The enzyme II FrvAB PTS system is involved in fructose transport. This is Fructose-like PTS system EIIBC component from Escherichia coli (strain K12).